The following is a 207-amino-acid chain: uncharacterized protein (207 aa).

This is an uncharacterized protein from Methanocaldococcus jannaschii (strain ATCC 43067 / DSM 2661 / JAL-1 / JCM 10045 / NBRC 100440) (Methanococcus jannaschii).